We begin with the raw amino-acid sequence, 640 residues long: tRNA-dihydrouridine(47) synthase [NAD(P)(+)]-like (640 aa).

The segment covering 1 to 10 (MAEVAEVAAE) has biased composition (low complexity). Disordered stretches follow at residues 1 to 22 (MAEV…VGAC) and 47 to 106 (DKQE…PHMK). Ala-2 carries the post-translational modification N-acetylalanine. Basic and acidic residues predominate over residues 64–91 (PEAKRIRLEDGQENGKTEVAVESHERQV). Residues 92 to 106 (PKRARGQNKSRPHMK) are compositionally biased toward basic residues. 2 C3H1-type zinc fingers span residues 110–140 (YDKE…HDVG) and 148–178 (ADLG…HLGP). Phosphoserine is present on Ser-267. FMN contacts are provided by residues 301 to 303 (PLT) and Gln-355. Cys-386 (proton donor) is an active-site residue. A Glycyl lysine isopeptide (Lys-Gly) (interchain with G-Cter in SUMO2) cross-link involves residue Lys-406. FMN-binding positions include Lys-425, His-455, 487-489 (NGD), and 510-511 (AR).

The protein belongs to the Dus family. Dus3 subfamily. FMN serves as cofactor.

The catalysed reaction is 5,6-dihydrouridine(47) in tRNA + NAD(+) = uridine(47) in tRNA + NADH + H(+). The enzyme catalyses 5,6-dihydrouridine(47) in tRNA + NADP(+) = uridine(47) in tRNA + NADPH + H(+). It carries out the reaction a 5,6-dihydrouridine in mRNA + NAD(+) = a uridine in mRNA + NADH + H(+). It catalyses the reaction a 5,6-dihydrouridine in mRNA + NADP(+) = a uridine in mRNA + NADPH + H(+). Functionally, catalyzes the synthesis of dihydrouridine, a modified base, in various RNAs, such as tRNAs, mRNAs and some long non-coding RNAs (lncRNAs). Mainly modifies the uridine in position 47 (U47) in the D-loop of most cytoplasmic tRNAs. Also able to mediate the formation of dihydrouridine in some mRNAs, thereby regulating their translation. In Rattus norvegicus (Rat), this protein is tRNA-dihydrouridine(47) synthase [NAD(P)(+)]-like.